Reading from the N-terminus, the 120-residue chain is Large ribosomal subunit protein uL18 (120 aa).

The protein belongs to the universal ribosomal protein uL18 family. As to quaternary structure, part of the 50S ribosomal subunit; part of the 5S rRNA/L5/L18/L25 subcomplex. Contacts the 5S and 23S rRNAs.

Functionally, this is one of the proteins that bind and probably mediate the attachment of the 5S RNA into the large ribosomal subunit, where it forms part of the central protuberance. The protein is Large ribosomal subunit protein uL18 of Geobacillus kaustophilus (strain HTA426).